We begin with the raw amino-acid sequence, 459 residues long: Glutamyl-tRNA reductase (459 aa).

Substrate contacts are provided by residues 47 to 50 (TCNR), Ser-140, 145 to 147 (EPQ), and Gln-151. Cys-48 acts as the Nucleophile in catalysis. 220–225 (AAGEMN) provides a ligand contact to NADP(+).

It belongs to the glutamyl-tRNA reductase family. Homodimer.

The catalysed reaction is (S)-4-amino-5-oxopentanoate + tRNA(Glu) + NADP(+) = L-glutamyl-tRNA(Glu) + NADPH + H(+). It functions in the pathway porphyrin-containing compound metabolism; protoporphyrin-IX biosynthesis; 5-aminolevulinate from L-glutamyl-tRNA(Glu): step 1/2. In terms of biological role, catalyzes the NADPH-dependent reduction of glutamyl-tRNA(Glu) to glutamate 1-semialdehyde (GSA). The polypeptide is Glutamyl-tRNA reductase (Psychrobacter arcticus (strain DSM 17307 / VKM B-2377 / 273-4)).